The sequence spans 611 residues: Serine protease FAM111A (611 aa).

A PIP-box motif is present at residues 16–28 (KCNMKIEHYFSPV). Lysine 20 participates in a covalent cross-link: Glycyl lysine isopeptide (Lys-Gly) (interchain with G-Cter in SUMO2). Serine 26 carries the post-translational modification Phosphoserine. Glycyl lysine isopeptide (Lys-Gly) (interchain with G-Cter in SUMO2) cross-links involve residues lysine 30 and lysine 65. Residues 44 to 73 (ESRGDPRATTNTQAQRFHSPKKNPEDQTMP) are disordered. Positions 336–611 (KVTKNSSSIK…DVEMMSDEDL (276 aa)) are interaction with SV40 large T antigen. Active-site charge relay system residues include histidine 385, aspartate 439, and serine 541.

Belongs to the FAM111 family. Interacts (via PIP-box) with PCNA; then interaction is direct. As to quaternary structure, (Microbial infection) Interacts with SV40 virus large T antigen and this interaction is required for efficient viral replication and sustained viral gene expression in restrictive cell types. In terms of assembly, (Microbial infection) Interacts with vaccinia virus protein OPG079; this interaction promotes the degradation of OPG079. Autocatalytically cleaved; activating the protein. Autocatalytic cleavage takes place in trans.

Its subcellular location is the nucleus. The protein resides in the chromosome. It is found in the cytoplasm. Single-stranded DNA-binding serine protease that mediates the proteolytic cleavage of covalent DNA-protein cross-links (DPCs) during DNA synthesis, thereby playing a key role in maintaining genomic integrity. DPCs are highly toxic DNA lesions that interfere with essential chromatin transactions, such as replication and transcription, and which are induced by reactive agents, such as UV light or formaldehyde. Protects replication fork from stalling by removing DPCs, such as covalently trapped topoisomerase 1 (TOP1) adducts on DNA lesion, or poly(ADP-ribose) polymerase 1 (PARP1)-DNA complexes trapped by PARP inhibitors. Required for PCNA loading on replication sites. Promotes S-phase entry and DNA synthesis. Also acts as a restriction factor for some viruses including SV40 polyomavirus and vaccinia virus. Mechanistically, affects nuclear barrier function during viral replication by mediating the disruption of the nuclear pore complex (NPC) via its protease activity. In turn, interacts with vaccinia virus DNA-binding protein OPG079 in the cytoplasm and promotes its degradation without the need of its protease activity but through autophagy. This is Serine protease FAM111A from Homo sapiens (Human).